Here is a 377-residue protein sequence, read N- to C-terminus: Actin-related protein T2 (377 aa).

It belongs to the actin family.

The protein localises to the cytoplasm. It localises to the cytoskeleton. In Bos taurus (Bovine), this protein is Actin-related protein T2 (ACTRT2).